A 248-amino-acid chain; its full sequence is Probable transcriptional regulatory protein MYPE8020 (248 aa).

It belongs to the TACO1 family.

The protein localises to the cytoplasm. The sequence is that of Probable transcriptional regulatory protein MYPE8020 from Malacoplasma penetrans (strain HF-2) (Mycoplasma penetrans).